Reading from the N-terminus, the 104-residue chain is Large ribosomal subunit protein uL24 (104 aa).

It belongs to the universal ribosomal protein uL24 family. As to quaternary structure, part of the 50S ribosomal subunit.

One of two assembly initiator proteins, it binds directly to the 5'-end of the 23S rRNA, where it nucleates assembly of the 50S subunit. Functionally, one of the proteins that surrounds the polypeptide exit tunnel on the outside of the subunit. In Pseudomonas syringae pv. syringae (strain B728a), this protein is Large ribosomal subunit protein uL24.